Reading from the N-terminus, the 413-residue chain is Probable N-acetyltransferase HLS1-like (413 aa).

The 183-residue stretch at 5–187 folds into the N-acetyltransferase domain; that stretch reads VEVREYDPSK…VNPVYAHRVN (183 aa).

Belongs to the acetyltransferase family.

This chain is Probable N-acetyltransferase HLS1-like, found in Arabidopsis thaliana (Mouse-ear cress).